A 145-amino-acid chain; its full sequence is Shadow of prion protein (145 aa).

Residues Met1–Ala24 form the signal peptide. The N-linked (GlcNAc...) asparagine glycan is linked to Asn105. A lipid anchor (GPI-anchor amidated serine) is attached at Ser119. The propeptide at Gly120–Pro145 is removed in mature form.

This sequence belongs to the SPRN family. In terms of processing, N-glycosylated. In terms of tissue distribution, mainly expressed in brain.

The protein localises to the cell membrane. Its function is as follows. Prion-like protein that has PrP(C)-like neuroprotective activity. May act as a modulator for the biological actions of normal and abnormal PrP. The chain is Shadow of prion protein (SPRN) from Ovis aries (Sheep).